We begin with the raw amino-acid sequence, 247 residues long: Flavin-dependent thymidylate synthase (247 aa).

In terms of domain architecture, ThyX spans 1–237 (MRVRLLEATE…PHTFEYYDAE (237 aa)). DUMP contacts are provided by residues 85 to 88 (QLTR), 98 to 100 (SMR), and Arg-176. An FAD-binding site is contributed by 88-90 (RHR). The ThyX motif signature appears at 88–98 (RHRHASFDVQS). Residues 192 to 194 (NPR) and His-198 each bind FAD. Arg-203 is a dUMP binding site. The active-site Involved in ionization of N3 of dUMP, leading to its activation is the Arg-203.

Belongs to the thymidylate synthase ThyX family. As to quaternary structure, homotetramer. The cofactor is FAD.

The enzyme catalyses dUMP + (6R)-5,10-methylene-5,6,7,8-tetrahydrofolate + NADPH + H(+) = dTMP + (6S)-5,6,7,8-tetrahydrofolate + NADP(+). Its pathway is pyrimidine metabolism; dTTP biosynthesis. In terms of biological role, catalyzes the reductive methylation of 2'-deoxyuridine-5'-monophosphate (dUMP) to 2'-deoxythymidine-5'-monophosphate (dTMP) while utilizing 5,10-methylenetetrahydrofolate (mTHF) as the methyl donor, and NADPH and FADH(2) as the reductant. The chain is Flavin-dependent thymidylate synthase from Halobacterium salinarum (strain ATCC 700922 / JCM 11081 / NRC-1) (Halobacterium halobium).